A 90-amino-acid polypeptide reads, in one-letter code: Small ribosomal subunit protein bS16 (90 aa).

It belongs to the bacterial ribosomal protein bS16 family.

The sequence is that of Small ribosomal subunit protein bS16 from Bacillus anthracis (strain A0248).